The sequence spans 321 residues: Probable heme-iron transport system permease protein IsdF (321 aa).

The next 9 membrane-spanning stretches (helical) occupy residues Leu-9–Gly-29, Ile-61–Ala-81, Ala-89–Ile-109, Phe-114–Leu-134, Val-143–Leu-163, Ile-179–Leu-199, Val-233–Val-253, Leu-267–Arg-287, and Glu-294–Cys-314.

This sequence belongs to the binding-protein-dependent transport system permease family. FecCD subfamily.

It is found in the cell membrane. Functionally, part of the binding-protein-dependent transport system for heme-iron. Responsible for the translocation of the substrate across the membrane. This chain is Probable heme-iron transport system permease protein IsdF (isdF), found in Staphylococcus aureus (strain NCTC 8325 / PS 47).